The sequence spans 208 residues: V-type ATP synthase subunit D (208 aa).

This sequence belongs to the V-ATPase D subunit family.

In terms of biological role, produces ATP from ADP in the presence of a proton gradient across the membrane. This chain is V-type ATP synthase subunit D, found in Chlamydia abortus (strain DSM 27085 / S26/3) (Chlamydophila abortus).